We begin with the raw amino-acid sequence, 415 residues long: Adipocyte plasma membrane-associated protein (415 aa).

A disordered region spans residues 1 to 29 (MSEADGLRQRRPLRPQVVTDDGQVPEVKE). The residue at position 2 (S2) is an N-acetylserine. At 2–39 (SEADGLRQRRPLRPQVVTDDGQVPEVKEGSSFSGRVFR) the chain is on the cytoplasmic side. T19 bears the Phosphothreonine mark. Residues 40–60 (MTFLMLAVSLAIPLLGAMMLL) traverse the membrane as a helical; Signal-anchor for type II membrane protein segment. Residues 61 to 415 (ESPIDPQSFS…FICRLSLQSI (355 aa)) are Extracellular-facing. An N-linked (GlcNAc...) asparagine glycan is attached at N159.

The protein belongs to the strictosidine synthase family. Glycosylated in vitro. Strongly expressed in adipose tissue. Highly expressed in liver, heart, and kidney. Expressed at intermediate level in brain and lung. Weakly expressed in spleen, skeletal muscle and testis.

The protein resides in the membrane. In terms of biological role, exhibits strong arylesterase activity with beta-naphthyl acetate and phenyl acetate. May play a role in adipocyte differentiation. This Mus musculus (Mouse) protein is Adipocyte plasma membrane-associated protein (Apmap).